A 415-amino-acid polypeptide reads, in one-letter code: Diaminopimelate decarboxylase (415 aa).

An N6-(pyridoxal phosphate)lysine modification is found at Lys54. Pyridoxal 5'-phosphate contacts are provided by residues Gly223 and Glu264–Arg267. Arg267, Arg303, and Tyr307 together coordinate substrate. The Proton donor role is filled by Cys338. The substrate site is built by Glu339 and Tyr374. Tyr374 lines the pyridoxal 5'-phosphate pocket.

This sequence belongs to the Orn/Lys/Arg decarboxylase class-II family. LysA subfamily. As to quaternary structure, homodimer. Pyridoxal 5'-phosphate is required as a cofactor.

It catalyses the reaction meso-2,6-diaminopimelate + H(+) = L-lysine + CO2. It functions in the pathway amino-acid biosynthesis; L-lysine biosynthesis via DAP pathway; L-lysine from DL-2,6-diaminopimelate: step 1/1. Specifically catalyzes the decarboxylation of meso-diaminopimelate (meso-DAP) to L-lysine. In Buchnera aphidicola subsp. Schizaphis graminum (strain Sg), this protein is Diaminopimelate decarboxylase.